We begin with the raw amino-acid sequence, 460 residues long: Cysteine--tRNA ligase (460 aa).

Residue cysteine 29 coordinates Zn(2+). Residues 31 to 41 (ATPQSSPHIGH) carry the 'HIGH' region motif. The Zn(2+) site is built by cysteine 212, histidine 237, and glutamate 241. A 'KMSKS' region motif is present at residues 268–272 (KMSKS). Lysine 271 provides a ligand contact to ATP.

This sequence belongs to the class-I aminoacyl-tRNA synthetase family. As to quaternary structure, monomer. It depends on Zn(2+) as a cofactor.

Its subcellular location is the cytoplasm. The enzyme catalyses tRNA(Cys) + L-cysteine + ATP = L-cysteinyl-tRNA(Cys) + AMP + diphosphate. The polypeptide is Cysteine--tRNA ligase (Corynebacterium glutamicum (strain R)).